The chain runs to 299 residues: MSSKATKSDVDPLHSFLAGSLAGAAEACITYPFEFAKTRLQLIDKASKASRNPLVLIYKTAKTQGIGSIYVGCPAFIIGNTAKAGIRFLGFDTIKDMLRDSETGELSGTRGVIAGLGAGLLESVAAVTPFEAIKTALIDDKQSATPKYHNNGRGVVRNYSSLVRDKGFSGLYRGVLPVSMRQAANQAVRLGCYNKIKTLIQDYTDSPKDKPLSSGLTFLVGAFSGIVTVYSTMPLDTVKTRMQSLDSTKYSSTMNCFATIFKEEGLKTFWKGATPRLGRLVLSGGIVFTIYEKVLVMLA.

Solcar repeat units lie at residues 10-97 (VDPL…IKDM), 109-199 (TRGV…IKTL), and 212-297 (LSSG…VLVM). Helical transmembrane passes span 16–36 (FLAG…FEFA), 66–86 (IGSI…KAGI), 113–133 (IAGL…FEAI), 174–193 (GVLP…LGCY), 215–235 (GLTF…TMPL), and 272–291 (GATP…FTIY).

Belongs to the mitochondrial carrier (TC 2.A.29) family.

The protein resides in the mitochondrion inner membrane. Transport of citrate across inner mitochondrial membrane. In Saccharomyces cerevisiae (strain ATCC 204508 / S288c) (Baker's yeast), this protein is Tricarboxylate transport protein (CTP1).